A 734-amino-acid polypeptide reads, in one-letter code: Photosystem I P700 chlorophyll a apoprotein A2 (734 aa).

The next 8 helical transmembrane spans lie at 46-69 (IFASHFGHLAVIFLWTSGNLFHVA), 135-158 (LYAGSLFLLFLAGVFLFAGWLHLQ), 175-199 (LNHHLSGLFGFSSLAWSAHLIHVAI), 273-291 (IAHHHLAIGVVFIFAGHMY), 330-353 (LHFQLGLALASLGVITSLVAQHMY), 369-395 (SALYTHHQYIAGFLMVGAFAHGAIFFV), 417-439 (AIISHLSWVSLFLGFHTLGIYVH), and 517-535 (FLIHHAIALALHTTTLILV). 2 residues coordinate [4Fe-4S] cluster: cysteine 559 and cysteine 568. The next 2 helical transmembrane spans lie at 575–596 (AFYLSMFWMLNTIGWVTFYWHW) and 643–665 (LSVWSWMFLFGHLIWATGFMFLI). Chlorophyll a-binding residues include histidine 654, methionine 662, and tyrosine 670. Tryptophan 671 lines the phylloquinone pocket. A helical membrane pass occupies residues 707 to 727 (LVGLIHFTAGYIFTYAAFVIA).

Belongs to the PsaA/PsaB family. As to quaternary structure, the PsaA/B heterodimer binds the P700 chlorophyll special pair and subsequent electron acceptors. PSI consists of a core antenna complex that captures photons, and an electron transfer chain that converts photonic excitation into a charge separation. The eukaryotic PSI reaction center is composed of at least 11 subunits. Requires P700 is a chlorophyll a/chlorophyll a' dimer, A0 is one or more chlorophyll a, A1 is one or both phylloquinones and FX is a shared 4Fe-4S iron-sulfur center. as cofactor.

Its subcellular location is the plastid. The protein localises to the chloroplast thylakoid membrane. It carries out the reaction reduced [plastocyanin] + hnu + oxidized [2Fe-2S]-[ferredoxin] = oxidized [plastocyanin] + reduced [2Fe-2S]-[ferredoxin]. Its function is as follows. PsaA and PsaB bind P700, the primary electron donor of photosystem I (PSI), as well as the electron acceptors A0, A1 and FX. PSI is a plastocyanin/cytochrome c6-ferredoxin oxidoreductase, converting photonic excitation into a charge separation, which transfers an electron from the donor P700 chlorophyll pair to the spectroscopically characterized acceptors A0, A1, FX, FA and FB in turn. Oxidized P700 is reduced on the lumenal side of the thylakoid membrane by plastocyanin or cytochrome c6. This Rhodomonas salina (Cryptomonas salina) protein is Photosystem I P700 chlorophyll a apoprotein A2.